Here is a 272-residue protein sequence, read N- to C-terminus: MDKYAVIGNPVEHSLSPVIFQAFEKQTNHSFDYLKIKAPVNGFAAAVKKFHDKGGKGANITLPFKEEAYQLADKRSQEANEAHAASALQFREDGTIYAVNYDGLGLVQDLTRNHNITLTQKSILIVGAGGATRGILGPLLNAAPEKIVIVNRTPSKAHALAKIFHLRGEIQGGGFDELEPMRYDVIIHATSLGHQGKFPPLPDGLIGSQSCCYDLSYGKIASPFLQWAKDQGAKYNFDGLGMLVEHNAAVFYLWFGIYPDTNPVIEMLQAHL.

Shikimate-binding positions include 14 to 16 and Thr-61; that span reads SLS. Lys-65 functions as the Proton acceptor in the catalytic mechanism. Asp-102 is a shikimate binding site. Residues 127–131, 151–156, and Leu-215 each bind NADP(+); these read GAGGA and NRTPSK. Tyr-217 is a binding site for shikimate. Residue Gly-239 coordinates NADP(+).

Belongs to the shikimate dehydrogenase family. As to quaternary structure, homodimer.

The catalysed reaction is shikimate + NADP(+) = 3-dehydroshikimate + NADPH + H(+). The protein operates within metabolic intermediate biosynthesis; chorismate biosynthesis; chorismate from D-erythrose 4-phosphate and phosphoenolpyruvate: step 4/7. Involved in the biosynthesis of the chorismate, which leads to the biosynthesis of aromatic amino acids. Catalyzes the reversible NADPH linked reduction of 3-dehydroshikimate (DHSA) to yield shikimate (SA). This is Shikimate dehydrogenase (NADP(+)) from Coxiella burnetii (strain Dugway 5J108-111).